We begin with the raw amino-acid sequence, 305 residues long: Ribosomal RNA small subunit methyltransferase H (305 aa).

S-adenosyl-L-methionine contacts are provided by residues 33-35 (GGY), Asp-51, Phe-82, Asp-96, and Gln-103.

It belongs to the methyltransferase superfamily. RsmH family.

It localises to the cytoplasm. It carries out the reaction cytidine(1402) in 16S rRNA + S-adenosyl-L-methionine = N(4)-methylcytidine(1402) in 16S rRNA + S-adenosyl-L-homocysteine + H(+). Functionally, specifically methylates the N4 position of cytidine in position 1402 (C1402) of 16S rRNA. The chain is Ribosomal RNA small subunit methyltransferase H from Rickettsia bellii (strain OSU 85-389).